Reading from the N-terminus, the 336-residue chain is Dihydroorotate dehydrogenase (quinone) (336 aa).

FMN-binding positions include 62-66 and T86; that span reads AGLDK. K66 provides a ligand contact to substrate. Residue 111-115 coordinates substrate; sequence NRMGF. 2 residues coordinate FMN: N139 and N172. N172 provides a ligand contact to substrate. The Nucleophile role is filled by S175. Residue N177 coordinates substrate. FMN is bound by residues K217 and T245. 246 to 247 serves as a coordination point for substrate; the sequence is NT. Residues G268, G297, and 318–319 each bind FMN; that span reads YS.

Belongs to the dihydroorotate dehydrogenase family. Type 2 subfamily. As to quaternary structure, monomer. It depends on FMN as a cofactor.

The protein resides in the cell membrane. It catalyses the reaction (S)-dihydroorotate + a quinone = orotate + a quinol. The protein operates within pyrimidine metabolism; UMP biosynthesis via de novo pathway; orotate from (S)-dihydroorotate (quinone route): step 1/1. Its function is as follows. Catalyzes the conversion of dihydroorotate to orotate with quinone as electron acceptor. In Enterobacter sp. (strain 638), this protein is Dihydroorotate dehydrogenase (quinone).